Reading from the N-terminus, the 156-residue chain is ATP synthase subunit b (156 aa).

The helical transmembrane segment at 7 to 27 (LFAQMIVFFVLWWVVARFVWP) threads the bilayer.

This sequence belongs to the ATPase B chain family. As to quaternary structure, F-type ATPases have 2 components, F(1) - the catalytic core - and F(0) - the membrane proton channel. F(1) has five subunits: alpha(3), beta(3), gamma(1), delta(1), epsilon(1). F(0) has three main subunits: a(1), b(2) and c(10-14). The alpha and beta chains form an alternating ring which encloses part of the gamma chain. F(1) is attached to F(0) by a central stalk formed by the gamma and epsilon chains, while a peripheral stalk is formed by the delta and b chains.

Its subcellular location is the cell inner membrane. In terms of biological role, f(1)F(0) ATP synthase produces ATP from ADP in the presence of a proton or sodium gradient. F-type ATPases consist of two structural domains, F(1) containing the extramembraneous catalytic core and F(0) containing the membrane proton channel, linked together by a central stalk and a peripheral stalk. During catalysis, ATP synthesis in the catalytic domain of F(1) is coupled via a rotary mechanism of the central stalk subunits to proton translocation. Functionally, component of the F(0) channel, it forms part of the peripheral stalk, linking F(1) to F(0). The chain is ATP synthase subunit b from Polynucleobacter necessarius subsp. necessarius (strain STIR1).